We begin with the raw amino-acid sequence, 207 residues long: Low-molecular weight cobalt-containing nitrile hydratase subunit alpha (207 aa).

Residues Cys-109, Cys-112, Ser-113, and Cys-114 each coordinate Co(3+).

This sequence belongs to the nitrile hydratase subunit alpha family. Heterodimer of an alpha and a beta chain. Co(3+) serves as cofactor.

The enzyme catalyses an aliphatic primary amide = an aliphatic nitrile + H2O. NHase catalyzes the hydration of various nitrile compounds to the corresponding amides. In Rhodococcus rhodochrous, this protein is Low-molecular weight cobalt-containing nitrile hydratase subunit alpha.